We begin with the raw amino-acid sequence, 349 residues long: Protein RecA (349 aa).

Residue 64-71 (GPESSGKT) coordinates ATP. The disordered stretch occupies residues 328-349 (NGEIEVEAPSEEEFEDLPLDLK). Over residues 331 to 349 (IEVEAPSEEEFEDLPLDLK) the composition is skewed to acidic residues.

This sequence belongs to the RecA family.

The protein resides in the cytoplasm. In terms of biological role, can catalyze the hydrolysis of ATP in the presence of single-stranded DNA, the ATP-dependent uptake of single-stranded DNA by duplex DNA, and the ATP-dependent hybridization of homologous single-stranded DNAs. It interacts with LexA causing its activation and leading to its autocatalytic cleavage. The polypeptide is Protein RecA (Halalkalibacterium halodurans (strain ATCC BAA-125 / DSM 18197 / FERM 7344 / JCM 9153 / C-125) (Bacillus halodurans)).